A 246-amino-acid polypeptide reads, in one-letter code: Biosynthetic peptidoglycan transglycosylase (246 aa).

A helical membrane pass occupies residues 28–48; the sequence is FALFLVLFLSSVVLFRFVPVP.

The protein belongs to the glycosyltransferase 51 family.

The protein resides in the cell inner membrane. The catalysed reaction is [GlcNAc-(1-&gt;4)-Mur2Ac(oyl-L-Ala-gamma-D-Glu-L-Lys-D-Ala-D-Ala)](n)-di-trans,octa-cis-undecaprenyl diphosphate + beta-D-GlcNAc-(1-&gt;4)-Mur2Ac(oyl-L-Ala-gamma-D-Glu-L-Lys-D-Ala-D-Ala)-di-trans,octa-cis-undecaprenyl diphosphate = [GlcNAc-(1-&gt;4)-Mur2Ac(oyl-L-Ala-gamma-D-Glu-L-Lys-D-Ala-D-Ala)](n+1)-di-trans,octa-cis-undecaprenyl diphosphate + di-trans,octa-cis-undecaprenyl diphosphate + H(+). The protein operates within cell wall biogenesis; peptidoglycan biosynthesis. In terms of biological role, peptidoglycan polymerase that catalyzes glycan chain elongation from lipid-linked precursors. The chain is Biosynthetic peptidoglycan transglycosylase from Pasteurella multocida (strain Pm70).